A 203-amino-acid polypeptide reads, in one-letter code: Interferon type B (203 aa).

A signal peptide spans 1–27 (MTANHQSPGMHSILLLLLLPALTTTFS). Disulfide bonds link Cys28/Cys125 and Cys57/Cys164. 2 N-linked (GlcNAc...) asparagine glycosylation sites follow: Asn37 and Asn160.

The protein belongs to the alpha/beta interferon family.

Its subcellular location is the secreted. Its function is as follows. Has antiviral activities. The sequence is that of Interferon type B (IFNB) from Gallus gallus (Chicken).